A 375-amino-acid chain; its full sequence is tRNA-specific 2-thiouridylase MnmA (375 aa).

Residues 17 to 24 and Met-43 each bind ATP; that span reads GMSGGVDS. The interaction with target base in tRNA stretch occupies residues 103–105; it reads NPD. Cys-108 serves as the catalytic Nucleophile. Cys-108 and Cys-204 form a disulfide bridge. Position 132 (Gly-132) interacts with ATP. An interaction with tRNA region spans residues 154–156; sequence KDQ. The Cysteine persulfide intermediate role is filled by Cys-204. Residues 316–317 form an interaction with tRNA region; sequence RY.

Belongs to the MnmA/TRMU family.

It localises to the cytoplasm. It carries out the reaction S-sulfanyl-L-cysteinyl-[protein] + uridine(34) in tRNA + AH2 + ATP = 2-thiouridine(34) in tRNA + L-cysteinyl-[protein] + A + AMP + diphosphate + H(+). Functionally, catalyzes the 2-thiolation of uridine at the wobble position (U34) of tRNA, leading to the formation of s(2)U34. The protein is tRNA-specific 2-thiouridylase MnmA of Stutzerimonas stutzeri (strain A1501) (Pseudomonas stutzeri).